We begin with the raw amino-acid sequence, 286 residues long: tRNA (guanine-N(7)-)-methyltransferase (286 aa).

Residues Gly103, 126 to 127 (EI), 161 to 162 (NA), and Cys181 each bind S-adenosyl-L-methionine. Asp184 is a catalytic residue. 259-261 (TEE) contacts S-adenosyl-L-methionine.

The protein belongs to the class I-like SAM-binding methyltransferase superfamily. TrmB family. In terms of assembly, forms a complex with TRM82.

It localises to the nucleus. It carries out the reaction guanosine(46) in tRNA + S-adenosyl-L-methionine = N(7)-methylguanosine(46) in tRNA + S-adenosyl-L-homocysteine. The protein operates within tRNA modification; N(7)-methylguanine-tRNA biosynthesis. Catalyzes the formation of N(7)-methylguanine at position 46 (m7G46) in tRNA. The chain is tRNA (guanine-N(7)-)-methyltransferase from Vanderwaltozyma polyspora (strain ATCC 22028 / DSM 70294 / BCRC 21397 / CBS 2163 / NBRC 10782 / NRRL Y-8283 / UCD 57-17) (Kluyveromyces polysporus).